A 186-amino-acid polypeptide reads, in one-letter code: MLLSRTAVAVARRATAAPALRRSIATTVVRCNAETKPVPHIKRLSEIKTKDDLFGPGAAPGTVPTDLEQATGLERLEILGKMEGVDVFDMKPLDASRRGTMENPISVRSAGDEQYAGCTGFPADSHNVIWLTMTRERPVERCPECGNVYKMDYVGPQDDHAHDHGHDHHGFEEPKTFADYVKPEYW.

A mitochondrion-targeting transit peptide spans 1-31 (MLLSRTAVAVARRATAAPALRRSIATTVVRC). Cysteine 118, histidine 126, cysteine 142, and cysteine 145 together coordinate Zn(2+).

This sequence belongs to the cytochrome c oxidase subunit 5B family. In terms of assembly, component of the cytochrome c oxidase (complex IV, CIV), a multisubunit enzyme composed of 11 subunits. The complex is composed of a catalytic core of 3 subunits Cox1, Cox2 and Cox3, encoded in the mitochondrial DNA, and 8 supernumerary subunits Cox4, Cox5a/Cox5, Cox6, Cox7, Cox8, Cox7a/Cox9, Cox6b/Cox12 and Cox6a/Cox13, which are encoded in the nuclear genome. The complex exists as a monomer or a dimer and forms respiratory supercomplexes (SCs) in the inner mitochondrial membrane with NADH-ubiquinone oxidoreductase (complex I, CI) and ubiquinol-cytochrome c oxidoreductase (cytochrome b-c1 complex, complex III, CIII), resulting in various different assemblies (supercomplexes I(1)IV(1), I(1)III(3)IV(2), III(2)IV(1) and III(2)IV(2) as well as larger supercomplexes of compositions like I(1)III(2)IV(5-6)).

Its subcellular location is the mitochondrion inner membrane. It participates in energy metabolism; oxidative phosphorylation. Component of the cytochrome c oxidase, the last enzyme in the mitochondrial electron transport chain which drives oxidative phosphorylation. The respiratory chain contains 3 multisubunit complexes succinate dehydrogenase (complex II, CII), ubiquinol-cytochrome c oxidoreductase (cytochrome b-c1 complex, complex III, CIII) and cytochrome c oxidase (complex IV, CIV), that cooperate to transfer electrons derived from NADH and succinate to molecular oxygen, creating an electrochemical gradient over the inner membrane that drives transmembrane transport and the ATP synthase. Cytochrome c oxidase is the component of the respiratory chain that catalyzes the reduction of oxygen to water. Electrons originating from reduced cytochrome c in the intermembrane space (IMS) are transferred via the dinuclear copper A center (CU(A)) of Cox2 and heme A of Cox1 to the active site in Cox1, a binuclear center (BNC) formed by heme A3 and copper B (CU(B)). The BNC reduces molecular oxygen to 2 water molecules using 4 electrons from cytochrome c in the IMS and 4 protons from the mitochondrial matrix. This chain is Cytochrome c oxidase subunit 4, mitochondrial (cox-4), found in Neurospora crassa (strain ATCC 24698 / 74-OR23-1A / CBS 708.71 / DSM 1257 / FGSC 987).